The chain runs to 122 residues: Large ribosomal subunit protein uL18 (122 aa).

This sequence belongs to the universal ribosomal protein uL18 family. In terms of assembly, part of the 50S ribosomal subunit; part of the 5S rRNA/L5/L18/L25 subcomplex. Contacts the 5S and 23S rRNAs.

This is one of the proteins that bind and probably mediate the attachment of the 5S RNA into the large ribosomal subunit, where it forms part of the central protuberance. The protein is Large ribosomal subunit protein uL18 of Desulfitobacterium hafniense (strain DSM 10664 / DCB-2).